Reading from the N-terminus, the 191-residue chain is Protein Ves (191 aa).

It belongs to the Ves family.

The chain is Protein Ves from Escherichia coli O127:H6 (strain E2348/69 / EPEC).